Consider the following 423-residue polypeptide: 5-hydroxytryptamine receptor 1A (423 aa).

Residues M1 to G20 are disordered. Residues M1–I38 lie on the Extracellular side of the membrane. Positions G7 to E16 are enriched in polar residues. N-linked (GlcNAc...) asparagine glycans are attached at residues N10, N11, and N24. The chain crosses the membrane as a helical span at residues T39–A59. The Cytoplasmic portion of the chain corresponds to A60 to Y73. Residues L74 to V98 form a helical membrane-spanning segment. The Extracellular segment spans residues L99–V107. The chain crosses the membrane as a helical span at residues T108–L132. C109 and C187 form a disulfide bridge. 2 residues coordinate serotonin: D116 and C120. The short motif at D133–Y135 is the DRY motif; important for ligand-induced conformation changes element. Residues D133 to R152 lie on the Cytoplasmic side of the membrane. Residues A153–G174 traverse the membrane as a helical segment. Topologically, residues W175–H193 are extracellular. A helical transmembrane segment spans residues G194–G216. Residues R217 to T346 lie on the Cytoplasmic side of the membrane. Positions R235 to T277 are disordered. 1D-myo-inositol 4-phosphate is bound by residues K345, T346, and G352. The chain crosses the membrane as a helical span at residues L347 to F370. The Extracellular segment spans residues C371–P378. Residues T379 to F403 traverse the membrane as a helical segment. The NPxxY motif; important for ligand-induced conformation changes and signaling motif lies at N396–Y400. 1D-myo-inositol 4-phosphate contacts are provided by F403, N404, and K405. Residues N404–R423 are Cytoplasmic-facing.

This sequence belongs to the G-protein coupled receptor 1 family. 5-hydroxytryptamine receptor subfamily. HTR1A sub-subfamily. As to quaternary structure, heterodimer; heterodimerizes with GPER1. Interacts with YIF1B. Interacts with GPR39 and GALR1.

The protein localises to the cell membrane. It localises to the cell projection. Its subcellular location is the dendrite. With respect to regulation, G-protein coupled receptor activity is regulated by lipids: phosphatidylinositol 4-phosphate increases HTR1A-mediated activity. Functionally, G-protein coupled receptor for 5-hydroxytryptamine (serotonin). Also functions as a receptor for various drugs and psychoactive substances. Ligand binding causes a conformation change that triggers signaling via guanine nucleotide-binding proteins (G proteins) and modulates the activity of downstream effectors, such as adenylate cyclase. HTR1A is coupled to G(i)/G(o) G alpha proteins and mediates inhibitory neurotransmission: signaling inhibits adenylate cyclase activity and activates a phosphatidylinositol-calcium second messenger system that regulates the release of Ca(2+) ions from intracellular stores. Beta-arrestin family members regulate signaling by mediating both receptor desensitization and resensitization processes. This Vulpes vulpes (Red fox) protein is 5-hydroxytryptamine receptor 1A (HTR1A).